The sequence spans 70 residues: Large ribosomal subunit protein bL31c (70 aa).

It belongs to the bacterial ribosomal protein bL31 family. Type A subfamily. Part of the 50S ribosomal subunit.

The protein localises to the plastid. It localises to the chloroplast. Binds the 23S rRNA. The polypeptide is Large ribosomal subunit protein bL31c (Porphyra purpurea (Red seaweed)).